We begin with the raw amino-acid sequence, 195 residues long: Glycerol-3-phosphate acyltransferase (195 aa).

The next 5 membrane-spanning stretches (helical) occupy residues 3 to 23 (FQVV…GFIL), 52 to 72 (LALL…AIAQ), 80 to 100 (ILFL…YLFF), 113 to 133 (LIFI…ICFL), and 147 to 167 (LIAL…IFAI).

It belongs to the PlsY family. In terms of assembly, probably interacts with PlsX.

The protein resides in the cell inner membrane. It carries out the reaction an acyl phosphate + sn-glycerol 3-phosphate = a 1-acyl-sn-glycero-3-phosphate + phosphate. Its pathway is lipid metabolism; phospholipid metabolism. Functionally, catalyzes the transfer of an acyl group from acyl-phosphate (acyl-PO(4)) to glycerol-3-phosphate (G3P) to form lysophosphatidic acid (LPA). This enzyme utilizes acyl-phosphate as fatty acyl donor, but not acyl-CoA or acyl-ACP. The protein is Glycerol-3-phosphate acyltransferase of Ehrlichia ruminantium (strain Gardel).